A 495-amino-acid chain; its full sequence is Probable leucine aminopeptidase 2 (495 aa).

A signal peptide spans 1 to 21 (MKSQLLSLAVAVTTISQGVVG). The region spanning 130 to 216 (MAELVVAKNN…SQEDGKNLAT (87 aa)) is the PA domain. Asn-142 and Asn-235 each carry an N-linked (GlcNAc...) asparagine glycan. His-259 and Asp-271 together coordinate Zn(2+). Asn-272 is a glycosylation site (N-linked (GlcNAc...) asparagine). The active-site Proton acceptor is Glu-303. Residues Glu-304 and Asp-332 each coordinate Zn(2+). A glycan (N-linked (GlcNAc...) asparagine) is linked at Asn-352. His-430 contacts Zn(2+).

Belongs to the peptidase M28 family. M28A subfamily. Monomer. Zn(2+) is required as a cofactor.

Its subcellular location is the secreted. Extracellular aminopeptidase that releases a wide variety of amino acids from natural peptides and contributes to pathogenicity. The chain is Probable leucine aminopeptidase 2 (LAP2) from Trichophyton verrucosum (strain HKI 0517).